The primary structure comprises 257 residues: Imidazole glycerol phosphate synthase subunit HisF (257 aa).

Catalysis depends on residues Asp-12 and Asp-131.

Belongs to the HisA/HisF family. Heterodimer of HisH and HisF.

The protein resides in the cytoplasm. The catalysed reaction is 5-[(5-phospho-1-deoxy-D-ribulos-1-ylimino)methylamino]-1-(5-phospho-beta-D-ribosyl)imidazole-4-carboxamide + L-glutamine = D-erythro-1-(imidazol-4-yl)glycerol 3-phosphate + 5-amino-1-(5-phospho-beta-D-ribosyl)imidazole-4-carboxamide + L-glutamate + H(+). It participates in amino-acid biosynthesis; L-histidine biosynthesis; L-histidine from 5-phospho-alpha-D-ribose 1-diphosphate: step 5/9. In terms of biological role, IGPS catalyzes the conversion of PRFAR and glutamine to IGP, AICAR and glutamate. The HisF subunit catalyzes the cyclization activity that produces IGP and AICAR from PRFAR using the ammonia provided by the HisH subunit. The polypeptide is Imidazole glycerol phosphate synthase subunit HisF (Mycobacteroides abscessus (strain ATCC 19977 / DSM 44196 / CCUG 20993 / CIP 104536 / JCM 13569 / NCTC 13031 / TMC 1543 / L948) (Mycobacterium abscessus)).